The chain runs to 188 residues: Dual specificity protein phosphatase 18 (188 aa).

Positions 19–160 (GLSQITKSLF…LIHYELQLFG (142 aa)) constitute a Tyrosine-protein phosphatase domain. The tract at residues 95–141 (MQKGRTLLHCAAGVSRSAALCLAYLMKYHAMSLVDAHTWTKSCRPII) is sufficient for mitochondrial localization. Cys104 functions as the Phosphocysteine intermediate in the catalytic mechanism.

Belongs to the protein-tyrosine phosphatase family. Non-receptor class dual specificity subfamily.

It localises to the cytoplasm. The protein resides in the nucleus. It is found in the mitochondrion inner membrane. It carries out the reaction O-phospho-L-tyrosyl-[protein] + H2O = L-tyrosyl-[protein] + phosphate. The catalysed reaction is O-phospho-L-seryl-[protein] + H2O = L-seryl-[protein] + phosphate. It catalyses the reaction O-phospho-L-threonyl-[protein] + H2O = L-threonyl-[protein] + phosphate. Its function is as follows. Can dephosphorylate single and diphosphorylated synthetic MAPK peptides, with preference for the phosphotyrosine and diphosphorylated forms over phosphothreonine. In vitro, dephosphorylates p-nitrophenyl phosphate (pNPP). This Mus musculus (Mouse) protein is Dual specificity protein phosphatase 18 (Dusp18).